The sequence spans 503 residues: Probable protein kinase UbiB (503 aa).

Residues 13 to 35 traverse the membrane as a helical segment; the sequence is TFYRYRLAGLCASLMGSGWICAL. In terms of domain architecture, Protein kinase spans 120 to 491; the sequence is EFETEPIASA…QQRQSLWLAV (372 aa). Residues 126 to 134 and lysine 148 each bind ATP; that span reads IASASIAQV. The active-site Proton acceptor is aspartate 283. Residues 485–502 form a helical membrane-spanning segment; sequence QSLWLAVIAVVLLLILLL.

This sequence belongs to the ABC1 family. UbiB subfamily.

It is found in the cell inner membrane. Its pathway is cofactor biosynthesis; ubiquinone biosynthesis [regulation]. Is probably a protein kinase regulator of UbiI activity which is involved in aerobic coenzyme Q (ubiquinone) biosynthesis. This Neisseria meningitidis serogroup B (strain ATCC BAA-335 / MC58) protein is Probable protein kinase UbiB.